Here is a 314-residue protein sequence, read N- to C-terminus: Acetyl-coenzyme A carboxylase carboxyl transferase subunit beta (314 aa).

The 270-residue stretch at 25–294 (VWTKCDSCSQ…PGTKPIVAEF (270 aa)) folds into the CoA carboxyltransferase N-terminal domain. Cys29, Cys32, Cys48, and Cys51 together coordinate Zn(2+). Residues 29 to 51 (CDSCSQVLYRAELERNLEVCPKC) form a C4-type zinc finger.

It belongs to the AccD/PCCB family. In terms of assembly, acetyl-CoA carboxylase is a heterohexamer composed of biotin carboxyl carrier protein (AccB), biotin carboxylase (AccC) and two subunits each of ACCase subunit alpha (AccA) and ACCase subunit beta (AccD). The cofactor is Zn(2+).

It is found in the cytoplasm. The catalysed reaction is N(6)-carboxybiotinyl-L-lysyl-[protein] + acetyl-CoA = N(6)-biotinyl-L-lysyl-[protein] + malonyl-CoA. The protein operates within lipid metabolism; malonyl-CoA biosynthesis; malonyl-CoA from acetyl-CoA: step 1/1. Component of the acetyl coenzyme A carboxylase (ACC) complex. Biotin carboxylase (BC) catalyzes the carboxylation of biotin on its carrier protein (BCCP) and then the CO(2) group is transferred by the transcarboxylase to acetyl-CoA to form malonyl-CoA. The protein is Acetyl-coenzyme A carboxylase carboxyl transferase subunit beta of Photorhabdus laumondii subsp. laumondii (strain DSM 15139 / CIP 105565 / TT01) (Photorhabdus luminescens subsp. laumondii).